The chain runs to 171 residues: Neuronal vesicle trafficking-associated protein 2 (171 aa).

The interval 1–21 (MVKLNSNPGEKGAKPPSVEDG) is disordered. Residues 1–71 (MVKLNSNPGE…FRVPKIAEFT (71 aa)) lie on the Cytoplasmic side of the membrane. The helical; Signal-anchor for type II membrane protein transmembrane segment at 72-92 (VTILVSLALAFLACIVFLVVY) threads the bilayer. The Lumenal portion of the chain corresponds to 93–171 (KAFTYDHSCP…EPKPPKTQGH (79 aa)).

The protein belongs to the NSG family. In terms of tissue distribution, specifically expressed in neural and neuroendocrine tissues. Pituitary and less in adrenal gland and testis. Expressed in the hippocampus throughout development. Remains enriched in layer V cortical neurons during development. At P0, broadly expressed in the neocortex. Is down-regulated overall at P8 and P14, but remains relatively enriched in layer V. At P0 is lower expressed in the cerebellum. Expression remains low throughout development, and is undetectable by adulthood.

It localises to the membrane. It is found in the golgi apparatus. The protein localises to the trans-Golgi network membrane. Its subcellular location is the cell projection. The protein resides in the dendrite. It localises to the endosome membrane. It is found in the early endosome membrane. The protein localises to the late endosome membrane. Its subcellular location is the lysosome lumen. The protein resides in the cytoplasmic vesicle membrane. It localises to the golgi stack membrane. It is found in the endosome. The protein localises to the multivesicular body membrane. This chain is Neuronal vesicle trafficking-associated protein 2, found in Mus musculus (Mouse).